Here is a 339-residue protein sequence, read N- to C-terminus: Phenylalanine--tRNA ligase alpha subunit (339 aa).

A Mg(2+)-binding site is contributed by E254.

Belongs to the class-II aminoacyl-tRNA synthetase family. Phe-tRNA synthetase alpha subunit type 1 subfamily. In terms of assembly, tetramer of two alpha and two beta subunits. The cofactor is Mg(2+).

It localises to the cytoplasm. It carries out the reaction tRNA(Phe) + L-phenylalanine + ATP = L-phenylalanyl-tRNA(Phe) + AMP + diphosphate + H(+). This is Phenylalanine--tRNA ligase alpha subunit (pheS) from Chlamydia pneumoniae (Chlamydophila pneumoniae).